We begin with the raw amino-acid sequence, 300 residues long: Ribosomal protein bS6--L-glutamate ligase (300 aa).

Residues 104–287 form the ATP-grasp domain; sequence MQLLARQGID…IAGKMIRWIE (184 aa). Residues Lys-141, 178–179, Asp-187, and 211–213 contribute to the ATP site; these read EY and RSN. Residues Asp-248, Glu-260, and Asn-262 each coordinate Mg(2+). 3 residues coordinate Mn(2+): Asp-248, Glu-260, and Asn-262.

This sequence belongs to the RimK family. It depends on Mg(2+) as a cofactor. The cofactor is Mn(2+).

Its function is as follows. An L-glutamate ligase that catalyzes the ATP-dependent post-translational addition of glutamate residues to the C-terminus of ribosomal protein bS6 (RpsF). Is also able to catalyze the synthesis of poly-alpha-glutamate in vitro, via ATP hydrolysis from unprotected glutamate as substrate. The number of glutamate residues added to either RpsF or to poly-alpha-glutamate changes with pH. This is Ribosomal protein bS6--L-glutamate ligase from Shigella boydii serotype 4 (strain Sb227).